Reading from the N-terminus, the 73-residue chain is Gas vesicle protein M2 (73 aa).

This sequence belongs to the gas vesicle GvpA family. As to quaternary structure, gvpF to GvpM interact with each other in vitro, and may form multi-subunit complex(es). Might interact with GvpA.

The protein resides in the gas vesicle. In terms of biological role, proteins GvpF to GvpM might be involved in nucleating gas vesicle formation. A minor component of the gas vesicle. Gas vesicles are hollow, gas filled proteinaceous nanostructures found in several microbial planktonic microorganisms. They allow positioning of halobacteria at the optimal depth for growth in the poorly aerated, shallow brine pools of their habitat. Expression of 2 c-vac DNA fragments containing 2 divergently transcribed regions (gvpE-gvpF-gvpG-gvpH-gvpI-gvpJ-gvpK-gvpL-gvpM and gvpA-gvpC-gvpN-gvpO) allows H.volcanii to produce gas vesicles. This chain is Gas vesicle protein M2, found in Halobacterium salinarum (strain ATCC 700922 / JCM 11081 / NRC-1) (Halobacterium halobium).